A 141-amino-acid polypeptide reads, in one-letter code: uncharacterized protein (141 aa).

Positions 8–112 (IGQVFKTKSL…VLDKQPKRNE (105 aa)) constitute a MaoC-like domain.

This is an uncharacterized protein from Bacillus subtilis (strain 168).